A 301-amino-acid chain; its full sequence is Glycine--tRNA ligase alpha subunit (301 aa).

It belongs to the class-II aminoacyl-tRNA synthetase family. As to quaternary structure, tetramer of two alpha and two beta subunits.

The protein localises to the cytoplasm. It carries out the reaction tRNA(Gly) + glycine + ATP = glycyl-tRNA(Gly) + AMP + diphosphate. This Shewanella amazonensis (strain ATCC BAA-1098 / SB2B) protein is Glycine--tRNA ligase alpha subunit.